We begin with the raw amino-acid sequence, 498 residues long: MEDKAQYVFALLGILATLYFVRWSTDPLRHIPAIGPSAPIVSYLSAYRYCRNAQSILQEGYHKYKVFRVSLVDRWVVVVSGADMNEELRKVPDTHVSFQEAADDLVQLKYTIAPDVNEHPIHTPVIRGPLTRNLGALFPDVVDEINVAFPELMPAAAKRGEWVAVSVRDTMGRIVSRASNRIFVGLPLCRNPDYLKTVVEFAFSVAKSRTIINAAPAVFRPIVGHFLPWAKRAVRNAGVHVKPLIRQRVSKMQDAGDDQTDKSCDYLMWLIEEAQKTKQNLDIVVQGILVSNFAAIHTSSNSITHSLLNLAAYPQHVQPLREEIEGIIKEYGWTKEAIGKMWKLDSFMRESQRLSGISGISVMRKVLQDITLSDGTYLPKGTLVVAAAFATHTDERYYENPEVFEPFRFYDMRTENDALRKQYVNTSREFITFGHGKHACPGRFFAVNELKAMMAYIILHYDVKLEEGVSRPENVWIWHNISPASTKVLFRERQSKVQ.

Residues Tyr-7–Ser-24 form a helical membrane-spanning segment. An N-linked (GlcNAc...) asparagine glycan is attached at Asn-425. Residue Cys-440 participates in heme binding.

The protein belongs to the cytochrome P450 family. Heme is required as a cofactor.

It localises to the membrane. It functions in the pathway secondary metabolite biosynthesis. Cytochrome P450 monooxygenase that is able to use dehydroabietic acid and testosterone as substrates for oxidation, suggesting that the natural substrate(s) may be structurally related to steroid compounds. In Postia placenta (strain ATCC 44394 / Madison 698-R) (Brown rot fungus), this protein is Cytochrome P450 monooxygenase 71.